Reading from the N-terminus, the 538-residue chain is MNQLCVERSPNISTATAYIKGKPKKSIERIKKKKDSNKSIKSQHKFEGSKISNKNNELKDVKSKDPKNYESYLNKNTKHKDILLKSKRSDNFKFSRRGFILSFTGNLEDFYNLSEEPLGKGTYGCVYKATDKLLKIQRAVKVVSKKKLKNIPRFRQEIDIMKNLDHPNVIKLLETFEDEEQIYLIMDLCTGGELFDKIIKKGSFVEMYASFIMKQIFSVLNYLHIRNICHRDIKPENFLFYDKSTESLIKIIDFGLAAYFNDIDYEMKTKAGTPYYVAPQVLTGCYDYKCDLWSAGVLFYIILCGYPPFYGESDHEILSMVKKGKYNFKGKEWNNISDEAKDLIKRCLTIDSGKRINASEALKHPWFKKKKGSFNLDVKMDIHVLENFKNYALLLKLQKLAMTIIAQQSNDYDLQQLKAVFLYLDEDGKGNITKNQLKKGLENSGLKLPQNFDVLLDQIDSDGSGRIDYTEFLAAALDRKHLSKKLIYCAFRVFDVDNDGEITTAELAHVTFFVILFLHHVNDFPRLENCTKYIDLNA.

The disordered stretch occupies residues 23-70 (PKKSIERIKKKKDSNKSIKSQHKFEGSKISNKNNELKDVKSKDPKNYE). The segment covering 56 to 68 (NELKDVKSKDPKN) has biased composition (basic and acidic residues). The region spanning 112–367 (NLSEEPLGKG…ASEALKHPWF (256 aa)) is the Protein kinase domain. ATP contacts are provided by residues 118–126 (LGKGTYGCV) and Lys-141. Asp-232 acts as the Proton acceptor in catalysis. The short motif at 387–395 (NFKNYALLL) is the J domain autoinhibitory motif element. The interval 387 to 422 (NFKNYALLLKLQKLAMTIIAQQSNDYDLQQLKAVFL) is j domain. The short motif at 396–405 (KLQKLAMTII) is the J domain EF-hand interaction motif element. EF-hand domains are found at residues 412 to 447 (YDLQQLKAVFLYLDEDGKGNITKNQLKKGLENSGLK), 450 to 481 (QNFDVLLDQIDSDGSGRIDYTEFLAAALDRKH), and 482 to 517 (LSKKLIYCAFRVFDVDNDGEITTAELAHVTFFVILF). 10 residues coordinate Ca(2+): Asp-460, Asp-462, Ser-464, Arg-466, Glu-471, Asp-495, Asp-497, Asp-499, Glu-501, and Glu-506.

It belongs to the protein kinase superfamily. Ser/Thr protein kinase family. CDPK subfamily. Mg(2+) is required as a cofactor.

Its subcellular location is the cytoplasm. It carries out the reaction L-seryl-[protein] + ATP = O-phospho-L-seryl-[protein] + ADP + H(+). It catalyses the reaction L-threonyl-[protein] + ATP = O-phospho-L-threonyl-[protein] + ADP + H(+). With respect to regulation, activated by calcium. Upon calcium binding to the EF-hand domain 2, the C-terminus of the junction domain (J domain) undergoes a conformational change which results in the dissociation of the pseudo-substrate inhibitory motif from the catalytic domain. This, in turn, may facilitate the autophosphorylation of the activation loop at Thr-273, which leads to the kinase activation. Calcium-dependent protein kinase which acts as a sensor and effector of intracellular Ca(2+) levels probably in part downstream of cGMP-activated PKG kinase. In the mosquito midgut, regulates the gliding motility of the ookinete which is essential for the ookinete to invade the midgut epithelium. However, another study showed that while required for ookinete invasion of the midgut epithelium, is not required for ookinete gliding motility. The sequence is that of Calcium-dependent protein kinase 3 from Plasmodium yoelii yoelii.